Reading from the N-terminus, the 151-residue chain is UPF0178 protein CJA_1978 (151 aa).

Belongs to the UPF0178 family.

This is UPF0178 protein CJA_1978 from Cellvibrio japonicus (strain Ueda107) (Pseudomonas fluorescens subsp. cellulosa).